We begin with the raw amino-acid sequence, 285 residues long: Protease HtpX homolog (285 aa).

The next 2 helical transmembrane spans lie at threonine 7 to glycine 27 and glycine 30 to aspartate 50. Histidine 131 provides a ligand contact to Zn(2+). Glutamate 132 is a catalytic residue. Histidine 135 contributes to the Zn(2+) binding site. Helical transmembrane passes span isoleucine 146 to glycine 166 and isoleucine 177 to isoleucine 197. Glutamate 202 is a binding site for Zn(2+).

Belongs to the peptidase M48B family. The cofactor is Zn(2+).

It localises to the cell inner membrane. This chain is Protease HtpX homolog, found in Burkholderia mallei (strain NCTC 10247).